A 381-amino-acid polypeptide reads, in one-letter code: Putative glutamate--cysteine ligase 2 (381 aa).

It belongs to the glutamate--cysteine ligase type 2 family. YbdK subfamily.

The catalysed reaction is L-cysteine + L-glutamate + ATP = gamma-L-glutamyl-L-cysteine + ADP + phosphate + H(+). Its function is as follows. ATP-dependent carboxylate-amine ligase which exhibits weak glutamate--cysteine ligase activity. The protein is Putative glutamate--cysteine ligase 2 of Polaromonas naphthalenivorans (strain CJ2).